The following is a 162-amino-acid chain: Deoxyuridine 5'-triphosphate nucleotidohydrolase (162 aa).

Position 11 is a phosphoserine (serine 11). Residues arginine 83–glycine 85, glycine 97–tyrosine 103, glycine 108, arginine 151, and phenylalanine 156–glycine 157 contribute to the dUTP site.

It belongs to the dUTPase family. In terms of assembly, homotrimer. Requires Mg(2+) as cofactor. Post-translationally, phosphorylated in vivo on Ser-11, a reaction that can be catalyzed in vitro by CDC2.

The protein localises to the nucleus. The catalysed reaction is dUTP + H2O = dUMP + diphosphate + H(+). Its pathway is pyrimidine metabolism; dUMP biosynthesis; dUMP from dCTP (dUTP route): step 2/2. Catalyzes the cleavage of 2'-deoxyuridine 5'-triphosphate (dUTP) into 2'-deoxyuridine 5'-monophosphate (dUMP) and inorganic pyrophosphate and through its action efficiently prevents uracil misincorporation into DNA and at the same time provides dUMP, the substrate for de novo thymidylate biosynthesis. Inhibits peroxisome proliferator-activated receptor (PPAR) activity by binding of its N-terminal to PPAR, preventing the latter's dimerization with retinoid X receptor. Essential for embryonic development. The chain is Deoxyuridine 5'-triphosphate nucleotidohydrolase (Dut) from Mus musculus (Mouse).